We begin with the raw amino-acid sequence, 464 residues long: MGSPGLRPTLLLPQVLLLLLALLHVPPSQGFPGSGDSPLEDDGVWSSHSLYKDTPWCSPIKVKYGDVYCRAPPGGYYKTALGTRCDIRCRKGYELHGSSQLVCQSNRRWSDKVICKQKRCPTLTMPANGGFKCVDGAYFNSRCEYYCSPGYTLKGERTVTCMDNKAWSGRPASCVDMEPPRIKCPSVKERIAEPNKLTVRVSWETPEGRDTADGILTDVILRGLPPGSNFPEGDHKIEYTVYDRAENKGTCKFRVKVRVRRCGKLNAPENGYMKCSSDGDNYGATCEFSCIGGYELQGSPARVCQSNLAWSGTEPSCAAMNVNVGVRTAAALLDQFYEKRRLLIVSTPTARNLLYRLQLGMLQQAQCGLDLRHITVVELVGVFPTLIGRIRAKIMPPALALQLRLLLRIPLYSFSMVLVDKHGMDKERYVSLVTPMALFNLIDTFPLRKEEMILQAEMGQSCNT.

A signal peptide spans 1–28 (MGSPGLRPTLLLPQVLLLLLALLHVPPS). Serine 34 carries an O-linked (Xyl...) (chondroitin sulfate) serine glycan. 5 disulfide bridges follow: cysteine 57-cysteine 85, cysteine 69-cysteine 103, cysteine 89-cysteine 115, cysteine 120-cysteine 161, and cysteine 147-cysteine 174. 2 consecutive Sushi domains span residues 57 to 117 (CSPI…ICKQ) and 118 to 176 (KRCP…SCVD). Residues 177 to 259 (MEPPRIKCPS…TCKFRVKVRV (83 aa)) form the HYR domain. Positions 260–319 (RRCGKLNAPENGYMKCSSDGDNYGATCEFSCIGGYELQGSPARVCQSNLAWSGTEPSCAA) constitute a Sushi 3 domain. Intrachain disulfides connect cysteine 262–cysteine 304 and cysteine 290–cysteine 317.

As to expression, normal cells and cells transformed by human papillomavirus type 16 E6E7 and polyomavirus large T. Suppressed in cells transformed by oncogenes such as V-SRC, V-ABL, V-FPS, V-MOS, V-SIS, V-K-RAS, and polyomavirus middle T.

This chain is Sushi repeat-containing protein SRPX (Srpx), found in Rattus norvegicus (Rat).